Consider the following 228-residue polypeptide: Ribonuclease S-4 (228 aa).

The N-terminal stretch at 1–27 (MGITGMTYMFTMVLSLIVLIFSASTVG) is a signal peptide. Position 36 (Gln36) interacts with RNA. A disulfide bond links Cys42 and Cys49. His60 provides a ligand contact to RNA. His60 (proton donor) is an active-site residue. Cys75 and Cys119 are joined by a disulfide. Asn87 is a glycosylation site (N-linked (GlcNAc) asparagine). An RNA-binding site is contributed by 98-99 (NV). Asn101 is a glycosylation site (N-linked (GlcNAc...) asparagine). RNA contacts are provided by residues Phe108, 111 to 112 (RE), and 115 to 116 (KH). The active site involves Glu112. His116 (proton acceptor) is an active-site residue. N-linked (GlcNAc...) asparagine glycosylation is found at Asn144, Asn160, and Asn175. Cystine bridges form between Cys183–Cys222 and Cys199–Cys210.

Belongs to the RNase T2 family. Post-translationally, the N-glycans attached at Asn-101, Asn-160 and Asn-175 consist predominantly of disaccharide (GlcNAc-GlcNAc). The N-glycan at 87 is 53% monosaccharide and 47% disaccharide. The N-glycan at Asn-144 contains mannose and xylose.

It localises to the secreted. The protein resides in the extracellular space. The catalysed reaction is a ribonucleotidyl-ribonucleotide-RNA + H2O = a 3'-end 3'-phospho-ribonucleotide-RNA + a 5'-end dephospho-ribonucleoside-RNA + H(+). Its function is as follows. Self-incompatibility (SI) is the inherited ability of a flowering plant to prevent self-fertilization by discriminating between self and non-self pollen during pollination. In many species, self-incompatibility is controlled by the single, multiallelic locus S. This Pyrus pyrifolia (Chinese pear) protein is Ribonuclease S-4.